We begin with the raw amino-acid sequence, 795 residues long: RAS guanyl-releasing protein 1 (795 aa).

The span at 1-12 (MGTLGKAREAPR) shows a compositional bias: basic and acidic residues. Residues 1 to 37 (MGTLGKAREAPRKPCHGSRAGPKARLEAKSTNSPLPA) form a disordered region. Residues 53–176 (LGHLAKGASL…HLIDTTQINS (124 aa)) enclose the N-terminal Ras-GEF domain. The ras exchanger motif region; required for transforming activity stretch occupies residues 57–110 (AKGASLDDLIDSCIQSFDADGNLCRNNQLLQVMLTMHRIIISSAELLQKVMNLY). Phosphothreonine; by PKC is present on Thr-184. In terms of domain architecture, Ras-GEF spans 205 to 436 (EPEELSEHLT…YELSYAREPR (232 aa)). 2 EF-hand domains span residues 470-505 (HVQRMVDSVFKNYDLDQDGYISQEEFEKIAASFPFS) and 506-532 (FCVMDKDREGLISRDEITAYFMRASSI). Residues Asp-483, Asp-485, Asp-487, Tyr-489, and Glu-494 each coordinate Ca(2+). The Phorbol-ester/DAG-type zinc finger occupies 541 to 591 (PHNFQETTYLKPTFCDNCAGFLWGVIKQGYRCKDCGMNCHKQCKDLVVFEC). Phosphoserine is present on Ser-597. Positions 686 to 694 (TPGHFVLSS) are suppress the PT region-mediated translocation to plasma membrane. The interval 717 to 795 (LVRKRAFVKW…LAQMDHGDSA (79 aa)) is PT region; mediates the BCR-dependent translocation to plasma membrane. The stretch at 738-779 (ELHLRLRTYQELEQEINTLKADNDALKIQLKYAQKKIESLQL) forms a coiled coil.

This sequence belongs to the RASGRP family. Homodimer. Forms a signaling complex with DGKZ and HRAS. Interacts with F-actin. Interacts with SKAP1. Detected in spleen and thymus. Expressed by mature thymocytes and to a lower extent by bone marrow-derived mast cells (at protein level). Detected in B-cells and keratinocytes (at protein level).

The protein resides in the cytoplasm. Its subcellular location is the cytosol. It localises to the cell membrane. It is found in the golgi apparatus membrane. The protein localises to the endoplasmic reticulum membrane. Its activity is regulated as follows. Autoinhibited. Activated by diacylglycerol and calcium binding, which induces a conformational change releasing the autoinhibitory state. Regulated by DGKA. Regulated by DGKZ. Regulated by PLC gamma and F-actin polymerization. Functions as a calcium- and diacylglycerol (DAG)-regulated nucleotide exchange factor specifically activating Ras through the exchange of bound GDP for GTP. Activates the Erk/MAP kinase cascade. Regulates T-cell/B-cell development, homeostasis and differentiation by coupling T-lymphocyte/B-lymphocyte antigen receptors to Ras. Regulates NK cell cytotoxicity and ITAM-dependent cytokine production by activation of Ras-mediated ERK and JNK pathways. Functions in mast cell degranulation and cytokine secretion, regulating FcERI-evoked allergic responses. May also function in differentiation of other cell types. Proto-oncogene, which promotes T-cell lymphomagenesis when its expression is deregulated. The sequence is that of RAS guanyl-releasing protein 1 (Rasgrp1) from Mus musculus (Mouse).